The sequence spans 695 residues: Protein-glutamine gamma-glutamyltransferase 2 (695 aa).

Active-site residues include cysteine 272, histidine 332, and aspartate 355. Residues asparagine 395, aspartate 397, glutamate 434, glutamate 444, and glutamate 449 each coordinate Ca(2+). GTP-binding positions include 476–482 (SIKHAQP) and 578–581 (ANIP).

This sequence belongs to the transglutaminase superfamily. Transglutaminase family. In terms of assembly, monomer. Ca(2+) is required as a cofactor.

It localises to the cytoplasm. The protein resides in the cytosol. The protein localises to the nucleus. It is found in the chromosome. Its subcellular location is the secreted. It localises to the extracellular space. The protein resides in the extracellular matrix. The protein localises to the cell membrane. It is found in the mitochondrion. It catalyses the reaction L-glutaminyl-[protein] + L-lysyl-[protein] = [protein]-L-lysyl-N(6)-5-L-glutamyl-[protein] + NH4(+). It carries out the reaction L-glutaminyl-[protein] + serotonin = 5-serotonyl-L-glutamyl-[protein] + NH4(+). The catalysed reaction is L-glutaminyl-[protein] + dopamine = 5-dopaminyl-L-glutamyl-[protein] + NH4(+). The enzyme catalyses L-glutaminyl-[protein] + histamine = 5-histaminyl-L-glutamyl-[protein] + NH4(+). It catalyses the reaction L-glutaminyl-[protein] + (R)-noradrenaline = 5-(R)-noradrenalinyl-L-glutamyl-[protein] + NH4(+). It carries out the reaction L-glutaminyl-[protein] + H2O = L-glutamyl-[protein] + NH4(+). Its activity is regulated as follows. Acyltransferase activity is regulated by the binding of GTP and Ca(2+): inactivated by GTP, which stabilizes its closed structure, thereby obstructing the accessibility of substrates to the active sites. In contrast, Ca(2+) acts as a cofactor by inducing conformational change to the active open form. In absence of Ca(2+), Mg(2+) may bind Ca(2+)-binding sites, promoting GTP-binding and subsequent inhibition of the acyltransferase activity. Calcium-dependent acyltransferase that catalyzes the formation of covalent bonds between peptide-bound glutamine and various primary amines, such as gamma-amino group of peptide-bound lysine, or mono- and polyamines, thereby producing cross-linked or aminated proteins, respectively. Involved in many biological processes, such as bone development, angiogenesis, wound healing, cellular differentiation, chromatin modification and apoptosis. Acts as a protein-glutamine gamma-glutamyltransferase by mediating the cross-linking of proteins: under physiological conditions, the protein cross-linking activity is inhibited by GTP; inhibition is relieved by Ca(2+) in response to various stresses. When secreted, catalyzes cross-linking of proteins of the extracellular matrix, resulting in the formation of scaffolds. Plays a key role during apoptosis, both by (1) promoting the cross-linking of cytoskeletal proteins resulting in condensation of the cytoplasm, and by (2) mediating cross-linking proteins of the extracellular matrix, resulting in the irreversible formation of scaffolds that stabilize the integrity of the dying cells before their clearance by phagocytosis, thereby preventing the leakage of harmful intracellular components. In addition to protein cross-linking, can use different monoamine substrates to catalyze a vast array of protein post-translational modifications: mediates aminylation of serotonin, dopamine, noradrenaline or histamine into glutamine residues of target proteins to generate protein serotonylation, dopaminylation, noradrenalinylation or histaminylation, respectively. Mediates protein serotonylation of small GTPases during activation and aggregation of platelets, leading to constitutive activation of these GTPases. Plays a key role in chromatin organization by mediating serotonylation and dopaminylation of histone H3. Catalyzes serotonylation of 'Gln-5' of histone H3 (H3Q5ser) during serotonergic neuron differentiation, thereby facilitating transcription. Acts as a mediator of neurotransmission-independent role of nuclear dopamine in ventral tegmental area (VTA) neurons: catalyzes dopaminylation of 'Gln-5' of histone H3 (H3Q5dop), thereby regulating relapse-related transcriptional plasticity in the reward system. Also acts as a protein deamidase by mediating the side chain deamidation of specific glutamine residues of proteins to glutamate. May also act as an isopeptidase cleaving the previously formed cross-links. Also able to participate in signaling pathways independently of its acyltransferase activity: acts as a signal transducer in alpha-1 adrenergic receptor-mediated stimulation of phospholipase C-delta (PLCD) activity and is required for coupling alpha-1 adrenergic agonists to the stimulation of phosphoinositide lipid metabolism. In Pagrus major (Red sea bream), this protein is Protein-glutamine gamma-glutamyltransferase 2.